We begin with the raw amino-acid sequence, 617 residues long: Proline--tRNA ligase (617 aa).

Belongs to the class-II aminoacyl-tRNA synthetase family. ProS type 1 subfamily. Homodimer.

It is found in the cytoplasm. The catalysed reaction is tRNA(Pro) + L-proline + ATP = L-prolyl-tRNA(Pro) + AMP + diphosphate. In terms of biological role, catalyzes the attachment of proline to tRNA(Pro) in a two-step reaction: proline is first activated by ATP to form Pro-AMP and then transferred to the acceptor end of tRNA(Pro). As ProRS can inadvertently accommodate and process non-cognate amino acids such as alanine and cysteine, to avoid such errors it has two additional distinct editing activities against alanine. One activity is designated as 'pretransfer' editing and involves the tRNA(Pro)-independent hydrolysis of activated Ala-AMP. The other activity is designated 'posttransfer' editing and involves deacylation of mischarged Ala-tRNA(Pro). The misacylated Cys-tRNA(Pro) is not edited by ProRS. This is Proline--tRNA ligase from Streptococcus pneumoniae (strain 70585).